The sequence spans 624 residues: Chaperone protein DnaK (624 aa).

A Phosphothreonine; by autocatalysis modification is found at Thr-174. Disordered stretches follow at residues 544 to 563 (KKAQQENNLDDMKQKRDDLS) and 576 to 624 (NAQK…DDKK). Positions 581 to 600 (QQAQGGPASGAATDAGAAQG) are enriched in low complexity. The span at 601 to 624 (SDDKKSDDDTINGDYKDVSDDDKK) shows a compositional bias: basic and acidic residues.

The protein belongs to the heat shock protein 70 family.

In terms of biological role, acts as a chaperone. The protein is Chaperone protein DnaK of Lacticaseibacillus casei (strain BL23) (Lactobacillus casei).